We begin with the raw amino-acid sequence, 440 residues long: Xylose isomerase (440 aa).

Residues His-101 and Asp-104 contribute to the active site. 7 residues coordinate Mg(2+): Glu-232, Glu-268, His-271, Asp-296, Asp-307, Asp-309, and Asp-339.

Belongs to the xylose isomerase family. As to quaternary structure, homotetramer. The cofactor is Mg(2+).

The protein localises to the cytoplasm. The enzyme catalyses alpha-D-xylose = alpha-D-xylulofuranose. This Salmonella typhi protein is Xylose isomerase.